A 378-amino-acid polypeptide reads, in one-letter code: Cyclic GMP-AMP synthase-like receptor 1 (378 aa).

Residues Glu71, Asp73, and Asp187 each coordinate Mg(2+). Residue 71–73 (EFD) participates in ATP binding. GTP-binding positions include Asp187 and 233-240 (TSSFYEAE). Residues 237–240 (YEAE), Lys258, and 271–275 (SYHIK) contribute to the ATP site.

This sequence belongs to the mab-21 family. The cofactor is Mg(2+). Requires Mn(2+) as cofactor.

It carries out the reaction GTP + ATP = 3',2'-cGAMP + 2 diphosphate. It catalyses the reaction GTP + ATP = pppA(2'-5')pG + diphosphate. The enzyme catalyses pppA(2'-5')pG = 3',2'-cGAMP + diphosphate. The enzyme activity is specifically activated by double-stranded RNA (dsRNA). Recognizes long dsRNA (&gt;30 bp) with no preference for 5' RNA phosphorylation. Its function is as follows. Nucleotidyltransferase that catalyzes the formation of cyclic GMP-AMP (3',2'-cGAMP) from ATP and GTP and plays a key role in antiviral innate immunity. Synthesizes 3',2'-cGAMP in a two-step reaction through production of the linear intermediate pppA(2'-5')pG. Acts as a key sensor of double-stranded RNA (dsRNA), the presence of dsRNA in the cytoplasm being a danger signal that triggers the immune responses. Directly binds dsRNA, activating the nucleotidyltransferase activity, leading to synthesis of 3',2'-cGAMP, a second messenger that binds to and activates Sting, thereby triggering the antiviral immune response via activation of the NF-kappa-B transcription factor Rel (Relish). 3',2'-cGAMP is protected from poxin cleavage. The protein is Cyclic GMP-AMP synthase-like receptor 1 of Drosophila melanogaster (Fruit fly).